The following is a 548-amino-acid chain: Tripartite motif-containing protein 55 (548 aa).

The segment at 10–66 adopts an RING-type zinc-finger fold; that stretch reads FSKEQQTMDNLEKQLICPICLEMFTKPVVILPCQHNLCRKCASDIFQASNPYLPTRG. Residues 103–145 form a B box-type zinc finger; that stretch reads NIIDIYKQESTRPEKKSDQPMCEEHEEERINIYCLNCEVPTCS. Residues Cys124, His127, Cys147, and His153 each contribute to the Zn(2+) site. The stretch at 168-248 forms a coiled coil; the sequence is QKSELSDGIA…EKLEHVRALI (81 aa). One can recognise a COS domain in the interval 269-327; the sequence is MDEPEMAVFLQNAKTLLKKISEASKAFQMEKIEHGYENMNHFTVNLNREEKIIREIDFY. A disordered region spans residues 326-532; the sequence is FYREDEDEEE…PASGSGADSE (207 aa). Composition is skewed to acidic residues over residues 328 to 339 and 347 to 360; these read REDEDEEEEEGG and GEVG…EEVE. Composition is skewed to low complexity over residues 484-496 and 512-531; these read VAAA…AAVS and EAPP…GADS.

As to quaternary structure, homooligomer and heterooligomer. Interacts with titin/TTN. Interacts with myosins. Interacts with SQSTM1 and NBR1. Isoform 4 may not able to interact with isoform 1, isoform 2 and isoform 3. Probably interacts with TRIM63 and TRIM54. Targeted for degradation through the proteasomal and lysosomal pathways in the presence of SUMO3. In terms of tissue distribution, highly expressed in muscle. Low-level expression in liver.

The protein localises to the nucleus. Its subcellular location is the cytoplasm. The enzyme catalyses S-ubiquitinyl-[E2 ubiquitin-conjugating enzyme]-L-cysteine + [acceptor protein]-L-lysine = [E2 ubiquitin-conjugating enzyme]-L-cysteine + N(6)-ubiquitinyl-[acceptor protein]-L-lysine.. E3 ubiquitin ligase that plays an important role in regulating cardiac development and contractility, muscle growth, metabolism, and fiber-type differentiation. Acts as a critical factor that regulates cardiomyocyte size during development in concert with TRIM63 by regulating E2F1-mediated gene expression. Plays a role in apoptosis induction in cardiomyocytes by promoting ubiquitination of the DUSP1 phosphatase. Promotes non-canonical NF-kappa-B signaling and B-cell-mediated immune responses by mediating NFKB2 'Lys-48'-linked ubiquitination and processing. In turn, NFKB2 is further processed by valosin-containing protein/VCP, an ATPase that mediates ubiquitin-dependent protein degradation by the proteasome. May play a role in preventing macrophages from producing inflammatory factors and migrating by downregulating the level of nuclear NF-kappa-B subunit RELA. Also modifies PPARG via polyubiquitination and accelerates PPARG proteasomal degradation to inhibit its activity. This chain is Tripartite motif-containing protein 55 (TRIM55), found in Homo sapiens (Human).